The primary structure comprises 336 residues: MIEADRLIQPQVIEPDEVVDRAMRPKLLDEYTGQDDTRAQLKIFIEAAQKRGEALDHMLIYGPPGLGKTTLAMIVANEMGVNIKSTSGPVLEKAGDLAALLTNLEENDVLFIDEIHRLSPVVEEILYPAMEDYQLDIMIGEGPAARSIKLDLPPFTLVGATTQAGSLTSPLRARFGIPLRLEFYNIKDLSTIVIRSAKVMELEIDEEGAIEIARRSRGTPRIANRLLRRVRDFAEVKHSGAVTKVVAELALDMLDVDAEGFDYMDRKLLLAIIDKFMGGPVGLDNLAAAIGEERETIEDVLEPFLIQQGFVQRTPRGRIATQRAYNHFNLIQPEAK.

Residues 4–184 form a large ATPase domain (RuvB-L) region; sequence ADRLIQPQVI…FGIPLRLEFY (181 aa). Residues R24, G65, K68, T69, T70, 131–133, R174, Y184, and R221 contribute to the ATP site; that span reads EDY. T69 serves as a coordination point for Mg(2+). The interval 185-255 is small ATPAse domain (RuvB-S); the sequence is NIKDLSTIVI…VAELALDMLD (71 aa). Residues 258–336 form a head domain (RuvB-H) region; it reads AEGFDYMDRK…HFNLIQPEAK (79 aa). 3 residues coordinate DNA: R294, R313, and R318.

This sequence belongs to the RuvB family. Homohexamer. Forms an RuvA(8)-RuvB(12)-Holliday junction (HJ) complex. HJ DNA is sandwiched between 2 RuvA tetramers; dsDNA enters through RuvA and exits via RuvB. An RuvB hexamer assembles on each DNA strand where it exits the tetramer. Each RuvB hexamer is contacted by two RuvA subunits (via domain III) on 2 adjacent RuvB subunits; this complex drives branch migration. In the full resolvosome a probable DNA-RuvA(4)-RuvB(12)-RuvC(2) complex forms which resolves the HJ.

The protein resides in the cytoplasm. It carries out the reaction ATP + H2O = ADP + phosphate + H(+). Its function is as follows. The RuvA-RuvB-RuvC complex processes Holliday junction (HJ) DNA during genetic recombination and DNA repair, while the RuvA-RuvB complex plays an important role in the rescue of blocked DNA replication forks via replication fork reversal (RFR). RuvA specifically binds to HJ cruciform DNA, conferring on it an open structure. The RuvB hexamer acts as an ATP-dependent pump, pulling dsDNA into and through the RuvAB complex. RuvB forms 2 homohexamers on either side of HJ DNA bound by 1 or 2 RuvA tetramers; 4 subunits per hexamer contact DNA at a time. Coordinated motions by a converter formed by DNA-disengaged RuvB subunits stimulates ATP hydrolysis and nucleotide exchange. Immobilization of the converter enables RuvB to convert the ATP-contained energy into a lever motion, pulling 2 nucleotides of DNA out of the RuvA tetramer per ATP hydrolyzed, thus driving DNA branch migration. The RuvB motors rotate together with the DNA substrate, which together with the progressing nucleotide cycle form the mechanistic basis for DNA recombination by continuous HJ branch migration. Branch migration allows RuvC to scan DNA until it finds its consensus sequence, where it cleaves and resolves cruciform DNA. This chain is Holliday junction branch migration complex subunit RuvB, found in Shewanella piezotolerans (strain WP3 / JCM 13877).